The chain runs to 167 residues: ATP synthase subunit b (167 aa).

The helical transmembrane segment at 10-30 (TFFFQLANTLIMFLILKHFLF) threads the bilayer.

The protein belongs to the ATPase B chain family. As to quaternary structure, F-type ATPases have 2 components, F(1) - the catalytic core - and F(0) - the membrane proton channel. F(1) has five subunits: alpha(3), beta(3), gamma(1), delta(1), epsilon(1). F(0) has three main subunits: a(1), b(2) and c(10-14). The alpha and beta chains form an alternating ring which encloses part of the gamma chain. F(1) is attached to F(0) by a central stalk formed by the gamma and epsilon chains, while a peripheral stalk is formed by the delta and b chains.

The protein localises to the cell membrane. Functionally, f(1)F(0) ATP synthase produces ATP from ADP in the presence of a proton or sodium gradient. F-type ATPases consist of two structural domains, F(1) containing the extramembraneous catalytic core and F(0) containing the membrane proton channel, linked together by a central stalk and a peripheral stalk. During catalysis, ATP synthesis in the catalytic domain of F(1) is coupled via a rotary mechanism of the central stalk subunits to proton translocation. In terms of biological role, component of the F(0) channel, it forms part of the peripheral stalk, linking F(1) to F(0). This Alkaliphilus oremlandii (strain OhILAs) (Clostridium oremlandii (strain OhILAs)) protein is ATP synthase subunit b.